The primary structure comprises 119 residues: Ribonuclease P protein component (119 aa).

The protein belongs to the RnpA family. As to quaternary structure, consists of a catalytic RNA component (M1 or rnpB) and a protein subunit.

The catalysed reaction is Endonucleolytic cleavage of RNA, removing 5'-extranucleotides from tRNA precursor.. RNaseP catalyzes the removal of the 5'-leader sequence from pre-tRNA to produce the mature 5'-terminus. It can also cleave other RNA substrates such as 4.5S RNA. The protein component plays an auxiliary but essential role in vivo by binding to the 5'-leader sequence and broadening the substrate specificity of the ribozyme. This chain is Ribonuclease P protein component, found in Sodalis glossinidius (strain morsitans).